The chain runs to 503 residues: Probable cytosol aminopeptidase (503 aa).

2 residues coordinate Mn(2+): Lys274 and Asp279. The active site involves Lys286. The Mn(2+) site is built by Asp297, Asp356, and Glu358. Arg360 is an active-site residue.

The protein belongs to the peptidase M17 family. Requires Mn(2+) as cofactor.

The protein localises to the cytoplasm. The catalysed reaction is Release of an N-terminal amino acid, Xaa-|-Yaa-, in which Xaa is preferably Leu, but may be other amino acids including Pro although not Arg or Lys, and Yaa may be Pro. Amino acid amides and methyl esters are also readily hydrolyzed, but rates on arylamides are exceedingly low.. It carries out the reaction Release of an N-terminal amino acid, preferentially leucine, but not glutamic or aspartic acids.. Presumably involved in the processing and regular turnover of intracellular proteins. Catalyzes the removal of unsubstituted N-terminal amino acids from various peptides. The sequence is that of Probable cytosol aminopeptidase from Burkholderia lata (strain ATCC 17760 / DSM 23089 / LMG 22485 / NCIMB 9086 / R18194 / 383).